A 67-amino-acid polypeptide reads, in one-letter code: Protein LITTLE ZIPPER 3 (67 aa).

Positions 14 to 59 (YIMKENERLRKKAELLNQENQQLLFQLKQKLSKTKNSNNGSNNDNK) form a coiled coil. A disordered region spans residues 42 to 67 (QKLSKTKNSNNGSNNDNKSSSASGQS).

Interacts with REV. Interacts with ATBH-8, ATBH-9, ATB-14 and ATB-15. Expressed in the adaxial epidermis of the cotyledons and leaves, and in the vascular cylinder of wild-type torpedo stage embryos. Confined in the central zone and the organizing center in the shoot apical meristem.

Its subcellular location is the nucleus. In terms of biological role, competitive inhibitor of the HD-ZIPIII transcription factors in shoot apical meristem (SAM) development. Acts by forming non-functional heterodimers. Part of a negative feedback loop. Involved in SAM development and lateral organ patterning. Essential for proper functioning of stem cells in the SAM. This chain is Protein LITTLE ZIPPER 3, found in Arabidopsis thaliana (Mouse-ear cress).